We begin with the raw amino-acid sequence, 378 residues long: L-asparaginase-like protein GF11609 (378 aa).

Positions 1-21 (MCSPLPLLILRLLLLTHPSLG) are cleaved as a signal peptide. 3 cysteine pairs are disulfide-bonded: cysteine 71–cysteine 76, cysteine 170–cysteine 186, and cysteine 325–cysteine 352.

Belongs to the Ntn-hydrolase family.

This is L-asparaginase-like protein GF11609 from Drosophila ananassae (Fruit fly).